A 388-amino-acid polypeptide reads, in one-letter code: Glucose-1-phosphate adenylyltransferase (388 aa).

Residues tyrosine 100, glycine 165, 180-181 (EK), and serine 191 each bind alpha-D-glucose 1-phosphate.

Belongs to the bacterial/plant glucose-1-phosphate adenylyltransferase family. Homotetramer.

The enzyme catalyses alpha-D-glucose 1-phosphate + ATP + H(+) = ADP-alpha-D-glucose + diphosphate. The protein operates within glycan biosynthesis; glycogen biosynthesis. Functionally, involved in the biosynthesis of ADP-glucose, a building block required for the elongation reactions to produce glycogen. Catalyzes the reaction between ATP and alpha-D-glucose 1-phosphate (G1P) to produce pyrophosphate and ADP-Glc. The protein is Glucose-1-phosphate adenylyltransferase of Clostridium perfringens (strain SM101 / Type A).